We begin with the raw amino-acid sequence, 116 residues long: Ribonuclease P protein component (116 aa).

It belongs to the RnpA family. As to quaternary structure, consists of a catalytic RNA component (M1 or rnpB) and a protein subunit.

The enzyme catalyses Endonucleolytic cleavage of RNA, removing 5'-extranucleotides from tRNA precursor.. RNaseP catalyzes the removal of the 5'-leader sequence from pre-tRNA to produce the mature 5'-terminus. It can also cleave other RNA substrates such as 4.5S RNA. The protein component plays an auxiliary but essential role in vivo by binding to the 5'-leader sequence and broadening the substrate specificity of the ribozyme. This Mycobacterium bovis (strain ATCC BAA-935 / AF2122/97) protein is Ribonuclease P protein component.